Here is a 198-residue protein sequence, read N- to C-terminus: Shikimate kinase (198 aa).

An ATP-binding site is contributed by 26–31 (GSGKSQ). Ser30 provides a ligand contact to Mg(2+). Residues Asp48, Arg72, and Gly94 each coordinate substrate. Residue Arg132 coordinates ATP. Substrate is bound at residue Arg151. ATP is bound at residue Gln167.

It belongs to the shikimate kinase family. As to quaternary structure, monomer. Requires Mg(2+) as cofactor.

Its subcellular location is the cytoplasm. It catalyses the reaction shikimate + ATP = 3-phosphoshikimate + ADP + H(+). It participates in metabolic intermediate biosynthesis; chorismate biosynthesis; chorismate from D-erythrose 4-phosphate and phosphoenolpyruvate: step 5/7. Catalyzes the specific phosphorylation of the 3-hydroxyl group of shikimic acid using ATP as a cosubstrate. This is Shikimate kinase from Prochlorococcus marinus (strain NATL2A).